Here is a 390-residue protein sequence, read N- to C-terminus: Isoaspartyl dipeptidase (390 aa).

Zn(2+) contacts are provided by H68 and H70. Substrate-binding positions include 75-77 (GGE), T106, and Y137. Position 162 (K162) interacts with Zn(2+). K162 carries the post-translational modification N6-carboxylysine. R169 lines the substrate pocket. Residues H201 and H230 each contribute to the Zn(2+) site. Residue R233 coordinates substrate. D285 serves as a coordination point for Zn(2+). D285 functions as the Proton acceptor in the catalytic mechanism. S289 is a binding site for substrate.

It belongs to the peptidase M38 family. The cofactor is Zn(2+). Co(2+) is required as a cofactor. In terms of processing, carboxylation allows a single lysine to coordinate two zinc ions.

It localises to the cytoplasm. P-hydroxymercuribenzoate causes a slight inhibition (8 to 17 %). Iodoacetamide, o-iodosobenzoate and ammonium persulfate do not inhibit the enzyme activity. Catalyzes the hydrolytic cleavage of a subset of L-isoaspartyl (L-beta-aspartyl) dipeptides. Used to degrade proteins damaged by L-isoaspartyl residues formation. The best substrate for the enzyme reported thus far is iso-Asp-Leu. This Escherichia coli (strain K12) protein is Isoaspartyl dipeptidase (iadA).